We begin with the raw amino-acid sequence, 320 residues long: GDP-L-fucose synthase (320 aa).

14–20 (GGSGLVG) contributes to the NADP(+) binding site. Y142 serves as the catalytic Proton donor/acceptor. NADP(+) contacts are provided by residues K146, 169–172 (PTNI), and H185. The substrate site is built by K193, R214, and D276.

The protein belongs to the NAD(P)-dependent epimerase/dehydratase family. Fucose synthase subfamily.

The catalysed reaction is GDP-beta-L-fucose + NADP(+) = GDP-4-dehydro-alpha-D-rhamnose + NADPH + H(+). The protein operates within nucleotide-sugar biosynthesis; GDP-L-fucose biosynthesis via de novo pathway; GDP-L-fucose from GDP-alpha-D-mannose: step 2/2. Its function is as follows. Catalyzes the two-step NADP-dependent conversion of GDP-4-dehydro-6-deoxy-D-mannose to GDP-fucose, involving an epimerase and a reductase reaction. The chain is GDP-L-fucose synthase (ger) from Dictyostelium discoideum (Social amoeba).